Here is a 163-residue protein sequence, read N- to C-terminus: Nucleotide-binding protein NFA_51200 (163 aa).

The protein belongs to the YajQ family.

In terms of biological role, nucleotide-binding protein. In Nocardia farcinica (strain IFM 10152), this protein is Nucleotide-binding protein NFA_51200.